Consider the following 105-residue polypeptide: Large ribosomal subunit protein uL24 (105 aa).

Positions 1 to 25 (MHIKKGDNVKVIAGKDKGKEGKVVS) are disordered.

Belongs to the universal ribosomal protein uL24 family. In terms of assembly, part of the 50S ribosomal subunit.

Its function is as follows. One of two assembly initiator proteins, it binds directly to the 5'-end of the 23S rRNA, where it nucleates assembly of the 50S subunit. Functionally, one of the proteins that surrounds the polypeptide exit tunnel on the outside of the subunit. The chain is Large ribosomal subunit protein uL24 from Staphylococcus saprophyticus subsp. saprophyticus (strain ATCC 15305 / DSM 20229 / NCIMB 8711 / NCTC 7292 / S-41).